Consider the following 175-residue polypeptide: ATP synthase subunit b (175 aa).

Residues 14 to 34 traverse the membrane as a helical segment; that stretch reads LSPNPGLIFWTTVSFVIVLLI.

Belongs to the ATPase B chain family. In terms of assembly, F-type ATPases have 2 components, F(1) - the catalytic core - and F(0) - the membrane proton channel. F(1) has five subunits: alpha(3), beta(3), gamma(1), delta(1), epsilon(1). F(0) has four main subunits: a(1), b(2) and c(10-14). The alpha and beta chains form an alternating ring which encloses part of the gamma chain. F(1) is attached to F(0) by a central stalk formed by the gamma and epsilon chains, while a peripheral stalk is formed by the delta and b chains.

The protein localises to the cell inner membrane. Functionally, f(1)F(0) ATP synthase produces ATP from ADP in the presence of a proton or sodium gradient. F-type ATPases consist of two structural domains, F(1) containing the extramembraneous catalytic core and F(0) containing the membrane proton channel, linked together by a central stalk and a peripheral stalk. During catalysis, ATP synthesis in the catalytic domain of F(1) is coupled via a rotary mechanism of the central stalk subunits to proton translocation. Component of the F(0) channel, it forms part of the peripheral stalk, linking F(1) to F(0). This Chlorobium phaeobacteroides (strain DSM 266 / SMG 266 / 2430) protein is ATP synthase subunit b.